Here is a 412-residue protein sequence, read N- to C-terminus: Type II methyltransferase M.Sau3AI (412 aa).

The region spanning 4 to 402 (IKVVELFAGV…NQIEKIDSIT (399 aa)) is the SAM-dependent MTase C5-type domain. The active site involves C85.

The protein belongs to the class I-like SAM-binding methyltransferase superfamily. C5-methyltransferase family.

It carries out the reaction a 2'-deoxycytidine in DNA + S-adenosyl-L-methionine = a 5-methyl-2'-deoxycytidine in DNA + S-adenosyl-L-homocysteine + H(+). A methylase that recognizes the double-stranded sequence 5'-GATC-3', methylates C-4 on both strands and protects the DNA from cleavage by the Sau3AI endonuclease. This Staphylococcus aureus protein is Type II methyltransferase M.Sau3AI (sau3AIM).